A 179-amino-acid chain; its full sequence is NADH-quinone oxidoreductase subunit B (179 aa).

Cys53, Cys54, Cys118, and Cys148 together coordinate [4Fe-4S] cluster.

This sequence belongs to the complex I 20 kDa subunit family. In terms of assembly, NDH-1 is composed of 14 different subunits. Subunits NuoB, C, D, E, F, and G constitute the peripheral sector of the complex. It depends on [4Fe-4S] cluster as a cofactor.

It is found in the cell membrane. The catalysed reaction is a quinone + NADH + 5 H(+)(in) = a quinol + NAD(+) + 4 H(+)(out). Its function is as follows. NDH-1 shuttles electrons from NADH, via FMN and iron-sulfur (Fe-S) centers, to quinones in the respiratory chain. The immediate electron acceptor for the enzyme in this species is believed to be a menaquinone. Couples the redox reaction to proton translocation (for every two electrons transferred, four hydrogen ions are translocated across the cytoplasmic membrane), and thus conserves the redox energy in a proton gradient. In Bacillus thuringiensis (strain Al Hakam), this protein is NADH-quinone oxidoreductase subunit B.